We begin with the raw amino-acid sequence, 147 residues long: Protein phosphatase 1 regulatory subunit 14B (147 aa).

The interval 1 to 55 is disordered; sequence MADSGTAGGAALAAPAPGPGSGGPGPRVYFQSPPGAAGEGPGGADDEGPVRRQGK. Residue A2 is modified to N-acetylalanine. S21 carries the phosphoserine modification. At Y29 the chain carries Phosphotyrosine. S32 carries the post-translational modification Phosphoserine. T57 is modified (phosphothreonine). A coiled-coil region spans residues 61 to 103; sequence DRKELRKRLNLEEWILEQLTRLYDCQEEEIPELEIDVDELLDM.

The protein belongs to the PP1 inhibitor family. Post-translationally, phosphorylated primarily on Thr-57 by PKC (in vitro). An unknown Ser is also phosphorylated by PKC (in vitro). In terms of tissue distribution, ubiquitous. Expressed at low levels.

It localises to the cytoplasm. Inhibitor of PPP1CA. Has over 50-fold higher inhibitory activity when phosphorylated. This Homo sapiens (Human) protein is Protein phosphatase 1 regulatory subunit 14B (PPP1R14B).